The chain runs to 38 residues: Photosystem II reaction center protein X (38 aa).

Residues 9–29 (IASLTAGALVLSAIGIALIII) form a helical membrane-spanning segment.

Belongs to the PsbX family. Type 1 subfamily. PSII is composed of 1 copy each of membrane proteins PsbA, PsbB, PsbC, PsbD, PsbE, PsbF, PsbH, PsbI, PsbJ, PsbK, PsbL, PsbM, PsbT, PsbX, PsbY, PsbZ, Psb30/Ycf12, at least 3 peripheral proteins of the oxygen-evolving complex and a large number of cofactors. It forms dimeric complexes.

It localises to the plastid. It is found in the chloroplast thylakoid membrane. Its function is as follows. Involved in the binding and/or turnover of quinones at the Q(B) site of photosystem II (PSII). PSII is a light-driven water plastoquinone oxidoreductase, using light energy to abstract electrons from H(2)O, generating a proton gradient subsequently used for ATP formation. The sequence is that of Photosystem II reaction center protein X from Thalassiosira pseudonana (Marine diatom).